A 332-amino-acid chain; its full sequence is UPF0194 membrane protein YbhG (332 aa).

The first 16 residues, 1–16, serve as a signal peptide directing secretion; the sequence is MMKKPVVIGLAVVVLA. The stretch at 108-209 forms a coiled coil; sequence EEIAQAAAAV…LNLQDSTLIA (102 aa).

The protein belongs to the UPF0194 family.

The protein localises to the periplasm. In Escherichia coli (strain 55989 / EAEC), this protein is UPF0194 membrane protein YbhG.